Here is a 1097-residue protein sequence, read N- to C-terminus: Transmembrane protein 132D (1097 aa).

The first 30 residues, 1 to 30 (MCPSEMGTLWYLWSPVLISLAALFSKVTEG), serve as a signal peptide directing secretion. Topologically, residues 31–913 (RGILESIQRF…LDQAAKGLSD (883 aa)) are extracellular. A compositionally biased stretch (basic and acidic residues) spans 233–245 (DERGDCAKEDSRK). The tract at residues 233 to 263 (DERGDCAKEDSRKSGGTPAGHNDVDESSPPL) is disordered. A helical transmembrane segment spans residues 914-934 (LEIGMYALLGVFCLAILVFLI). The Cytoplasmic segment spans residues 935 to 1097 (NCVTFALKYR…SCMERLHEHV (163 aa)). Residues 1021-1042 (MLTDDQEQKSEPPTSPTSKRKR) form a disordered region.

It belongs to the TMEM132 family. In terms of tissue distribution, expressed in mature oligodendrocytes in the white and gray matter of the brain.

The protein resides in the membrane. In terms of biological role, regulates neuronal morphology via inhibition of the WAVE regulatory complex (WCR), a complex that controls F-actin cytoskeletal dynamics. This Mus musculus (Mouse) protein is Transmembrane protein 132D (Tmem132d).